Here is a 142-residue protein sequence, read N- to C-terminus: Hemoglobin subunit alpha (142 aa).

In terms of domain architecture, Globin spans 2-142; that stretch reads VLSPADKTNV…VSTVLVSKYR (141 aa). S4 is subject to Phosphoserine. Residue K8 is modified to N6-succinyllysine. T9 bears the Phosphothreonine mark. Residue K12 is modified to N6-succinyllysine. Residue K17 is modified to N6-acetyllysine; alternate. K17 bears the N6-succinyllysine; alternate mark. A Phosphotyrosine modification is found at Y25. Residue S36 is modified to Phosphoserine. Position 41 is an N6-succinyllysine (K41). S50 carries the post-translational modification Phosphoserine. H59 lines the O2 pocket. A heme b-binding site is contributed by H88. S103 carries the phosphoserine modification. Residue T109 is modified to Phosphothreonine. Phosphoserine is present on residues S125 and S132. Position 135 is a phosphothreonine (T135). The residue at position 139 (S139) is a Phosphoserine.

This sequence belongs to the globin family. As to quaternary structure, heterotetramer of two alpha chains and two beta chains. Red blood cells.

In terms of biological role, involved in oxygen transport from the lung to the various peripheral tissues. Its function is as follows. Hemopressin acts as an antagonist peptide of the cannabinoid receptor CNR1. Hemopressin-binding efficiently blocks cannabinoid receptor CNR1 and subsequent signaling. The chain is Hemoglobin subunit alpha (HBA) from Antrozous pallidus (Pallid bat).